Here is a 54-residue protein sequence, read N- to C-terminus: Photosystem II reaction center protein K (54 aa).

Residues 1–17 (MLLEHVTITLLNNTSFA) constitute a propeptide that is removed on maturation. The chain crosses the membrane as a helical span at residues 29–49 (LIDVLPIIPLLFLLLAFVWQA).

The protein belongs to the PsbK family. PSII is composed of 1 copy each of membrane proteins PsbA, PsbB, PsbC, PsbD, PsbE, PsbF, PsbH, PsbI, PsbJ, PsbK, PsbL, PsbM, PsbT, PsbY, PsbZ, Psb30/Ycf12, at least 3 peripheral proteins of the oxygen-evolving complex and a large number of cofactors. It forms dimeric complexes.

It localises to the plastid. The protein localises to the chloroplast thylakoid membrane. One of the components of the core complex of photosystem II (PSII). PSII is a light-driven water:plastoquinone oxidoreductase that uses light energy to abstract electrons from H(2)O, generating O(2) and a proton gradient subsequently used for ATP formation. It consists of a core antenna complex that captures photons, and an electron transfer chain that converts photonic excitation into a charge separation. The polypeptide is Photosystem II reaction center protein K (Euglena mutabilis).